Reading from the N-terminus, the 449-residue chain is Putative BTB/POZ domain-containing protein L742 (449 aa).

The BTB domain maps to Glu79–Gly148.

The protein belongs to the mimivirus BTB/WD family.

In Acanthamoeba polyphaga mimivirus (APMV), this protein is Putative BTB/POZ domain-containing protein L742.